Consider the following 155-residue polypeptide: Ribosome maturation factor RimP (155 aa).

Belongs to the RimP family.

The protein localises to the cytoplasm. Its function is as follows. Required for maturation of 30S ribosomal subunits. This chain is Ribosome maturation factor RimP, found in Dichelobacter nodosus (strain VCS1703A).